Reading from the N-terminus, the 97-residue chain is UPF0235 protein Daro_3887 (97 aa).

This sequence belongs to the UPF0235 family.

The polypeptide is UPF0235 protein Daro_3887 (Dechloromonas aromatica (strain RCB)).